The sequence spans 353 residues: Inactive ubiquitin thioesterase OTULINL (353 aa).

The tract at residues 1–80 (MEAPRSAPRE…KWWIGYLQRK (80 aa)) is required for membrane binding. Residues 125 to 353 (KCVRAVKRDN…NGHHYHIPVF (229 aa)) form the OTU domain.

It belongs to the peptidase C65 family. Otulin subfamily. Does not bind ubiquitin or ubiquitin-like proteins.

Its subcellular location is the cytoplasm. The protein resides in the endoplasmic reticulum membrane. It is found in the nucleus envelope. Lacks deubiquitinase activity. This chain is Inactive ubiquitin thioesterase OTULINL, found in Mus musculus (Mouse).